The sequence spans 44 residues: Photosystem I reaction center subunit IX (44 aa).

A helical transmembrane segment spans residues 7–27; it reads YLSVAPVLSTLWFGSLAGLLI.

Belongs to the PsaJ family.

The protein resides in the plastid. Its subcellular location is the chloroplast thylakoid membrane. Functionally, may help in the organization of the PsaE and PsaF subunits. The chain is Photosystem I reaction center subunit IX from Fagopyrum esculentum subsp. ancestrale (Wild buckwheat).